Reading from the N-terminus, the 280-residue chain is Dehydrogenase/reductase SDR family member 2, mitochondrial (280 aa).

Residues 1–23 (MLSAVARGYQGWFHPCARLSVRM) constitute a mitochondrion transit peptide. Residues serine 46 and isoleucine 48 each coordinate NAD(+). Lysine 96 is subject to N6-acetyllysine; alternate. An N6-succinyllysine; alternate modification is found at lysine 96. Residue serine 172 coordinates substrate. Residues tyrosine 185 and lysine 189 each contribute to the NAD(+) site. Catalysis depends on tyrosine 185, which acts as the Proton acceptor. Position 219 is an N6-acetyllysine; alternate (lysine 219). Residue lysine 219 is modified to N6-succinyllysine; alternate. An NAD(+)-binding site is contributed by threonine 220. Position 223 is a phosphoserine (serine 223). Lysine 237 is modified (N6-succinyllysine).

Belongs to the short-chain dehydrogenases/reductases (SDR) family. In terms of assembly, directly interacts with MDM2; this interaction occurs in the nucleus and does not target DHRS2 to degradation. As to expression, widely expressed, with highest levels in liver and kidney, followed by heart, spleen, skeletal muscle and placenta. In hemopoietic cells, expressed in dendritic cells, but not in monocytes, macrophages, granulocytes, nor in B and T lymphocytes.

It is found in the mitochondrion matrix. The protein resides in the nucleus. Functionally, NADPH-dependent oxidoreductase which catalyzes the reduction of dicarbonyl compounds. Displays reductase activity in vitro with 3,4-hexanedione, 2,3-heptanedione and 1-phenyl-1,2-propanedione as substrates. May function as a dicarbonyl reductase in the enzymatic inactivation of reactive carbonyls involved in covalent modification of cellular components. Also displays a minor hydroxysteroid dehydrogenase activity toward bile acids such as ursodeoxycholic acid (UDCA) and isoursodeoxycholic acid (isoUDCA), which makes it unlikely to control hormone levels. Doesn't show any activity in vitro with retinoids and sugars as substrates. Attenuates MDM2-mediated p53/TP53 degradation, leading to p53/TP53 stabilization and increased transcription activity, resulting in the accumulation of MDM2 and CDKN1A/p21. Reduces proliferation, migration and invasion of cancer cells and well as the production of ROS in cancer. This Homo sapiens (Human) protein is Dehydrogenase/reductase SDR family member 2, mitochondrial.